The primary structure comprises 246 residues: Probable transcriptional regulatory protein CLB_3102 (246 aa).

It belongs to the TACO1 family.

The protein resides in the cytoplasm. The sequence is that of Probable transcriptional regulatory protein CLB_3102 from Clostridium botulinum (strain ATCC 19397 / Type A).